Consider the following 690-residue polypeptide: DNA topoisomerase 1 (690 aa).

The 119-residue stretch at 3 to 121 folds into the Toprim domain; the sequence is DYLVIVESPA…EITKQAIKDA (119 aa). Residues E9 and D82 each coordinate Mg(2+). In terms of domain architecture, Topo IA-type catalytic spans 129–558; the sequence is NMDLVDAQQA…DFYKGFEERL (430 aa). The interaction with DNA stretch occupies residues 163 to 168; the sequence is SAGRVQ. The active-site O-(5'-phospho-DNA)-tyrosine intermediate is the Y298. Residues 329–354 form a disordered region; the sequence is NGTKAVKKDKKSQDAHEAIRPTSVER. Residues 339 to 354 show a composition bias toward basic and acidic residues; it reads KSQDAHEAIRPTSVER. C4-type zinc fingers lie at residues 579–605, 619–647, and 660–683; these read CEKCGHEMVYKMGRYGKFMACSNFPDC, CPKCEKGEIVERKSKKRRVFYGCNQYPEC, and CPKCSSYLVEKRTKKQVQVQCSSC.

Belongs to the type IA topoisomerase family. As to quaternary structure, monomer. The cofactor is Mg(2+).

The catalysed reaction is ATP-independent breakage of single-stranded DNA, followed by passage and rejoining.. In terms of biological role, releases the supercoiling and torsional tension of DNA, which is introduced during the DNA replication and transcription, by transiently cleaving and rejoining one strand of the DNA duplex. Introduces a single-strand break via transesterification at a target site in duplex DNA. The scissile phosphodiester is attacked by the catalytic tyrosine of the enzyme, resulting in the formation of a DNA-(5'-phosphotyrosyl)-enzyme intermediate and the expulsion of a 3'-OH DNA strand. The free DNA strand then undergoes passage around the unbroken strand, thus removing DNA supercoils. Finally, in the religation step, the DNA 3'-OH attacks the covalent intermediate to expel the active-site tyrosine and restore the DNA phosphodiester backbone. In Halalkalibacterium halodurans (strain ATCC BAA-125 / DSM 18197 / FERM 7344 / JCM 9153 / C-125) (Bacillus halodurans), this protein is DNA topoisomerase 1.